Here is a 199-residue protein sequence, read N- to C-terminus: ATP-dependent Clp protease proteolytic subunit (199 aa).

Catalysis depends on serine 97, which acts as the Nucleophile. Residue histidine 122 is part of the active site.

It belongs to the peptidase S14 family. As to quaternary structure, fourteen ClpP subunits assemble into 2 heptameric rings which stack back to back to give a disk-like structure with a central cavity, resembling the structure of eukaryotic proteasomes.

It is found in the cytoplasm. The enzyme catalyses Hydrolysis of proteins to small peptides in the presence of ATP and magnesium. alpha-casein is the usual test substrate. In the absence of ATP, only oligopeptides shorter than five residues are hydrolyzed (such as succinyl-Leu-Tyr-|-NHMec, and Leu-Tyr-Leu-|-Tyr-Trp, in which cleavage of the -Tyr-|-Leu- and -Tyr-|-Trp bonds also occurs).. Cleaves peptides in various proteins in a process that requires ATP hydrolysis. Has a chymotrypsin-like activity. Plays a major role in the degradation of misfolded proteins. The sequence is that of ATP-dependent Clp protease proteolytic subunit from Geotalea uraniireducens (strain Rf4) (Geobacter uraniireducens).